Reading from the N-terminus, the 221-residue chain is Sigma non-opioid intracellular receptor 1 (221 aa).

The Lumenal segment spans residues 1 to 4 (MALW). The chain crosses the membrane as a helical span at residues 5 to 27 (RGLRAVLAVAGLAVAVQLLRGWL). At 28–221 (GSKSYVFNRE…STHLSELGFF (194 aa)) the chain is on the cytoplasmic side. The segment at 96–103 (SLTEYVLL) is important for ligand-binding. The tract at residues 174–221 (FIPSTLGFALADTIFSTQDFLTLFYTVKVYGKALLLETSTHLSELGFF) is C-terminal hydrophobic region.

The protein belongs to the ERG2 family. Homotrimer.

The protein resides in the nucleus inner membrane. It localises to the nucleus outer membrane. The protein localises to the nucleus envelope. It is found in the cytoplasmic vesicle. Its subcellular location is the endoplasmic reticulum membrane. The protein resides in the membrane. May function in lipid transport from the endoplasmic reticulum and be involved in a wide array of cellular functions probably through regulation of the biogenesis of lipid microdomains at the plasma membrane. May regulate calcium efflux at the endoplasmic reticulum. The polypeptide is Sigma non-opioid intracellular receptor 1 (sigmar1) (Xenopus tropicalis (Western clawed frog)).